The following is a 29-amino-acid chain: Cycloviolacin-O16 (29 aa).

The segment at residues 1–29 is a cross-link (cyclopeptide (Gly-Asn)); sequence GLPCGETCFTGKCYTPGCSCSYPICKKIN. Cystine bridges form between Cys4/Cys18, Cys8/Cys20, and Cys13/Cys25.

Post-translationally, this is a cyclic peptide.

Probably participates in a plant defense mechanism. The sequence is that of Cycloviolacin-O16 from Viola odorata (Sweet violet).